The primary structure comprises 162 residues: NADH-quinone oxidoreductase subunit I (162 aa).

4Fe-4S ferredoxin-type domains follow at residues 53-83 (LRRY…IEAE) and 93-122 (TRYD…EGPN). Residues Cys63, Cys66, Cys69, Cys73, Cys102, Cys105, Cys108, and Cys112 each coordinate [4Fe-4S] cluster.

Belongs to the complex I 23 kDa subunit family. NDH-1 is composed of 14 different subunits. Subunits NuoA, H, J, K, L, M, N constitute the membrane sector of the complex. [4Fe-4S] cluster serves as cofactor.

It is found in the cell inner membrane. It carries out the reaction a quinone + NADH + 5 H(+)(in) = a quinol + NAD(+) + 4 H(+)(out). NDH-1 shuttles electrons from NADH, via FMN and iron-sulfur (Fe-S) centers, to quinones in the respiratory chain. The immediate electron acceptor for the enzyme in this species is believed to be ubiquinone. Couples the redox reaction to proton translocation (for every two electrons transferred, four hydrogen ions are translocated across the cytoplasmic membrane), and thus conserves the redox energy in a proton gradient. This Rhodospirillum rubrum (strain ATCC 11170 / ATH 1.1.1 / DSM 467 / LMG 4362 / NCIMB 8255 / S1) protein is NADH-quinone oxidoreductase subunit I.